Reading from the N-terminus, the 140-residue chain is Nucleoside diphosphate kinase (140 aa).

Residues Lys11, Phe59, Arg87, Thr93, Arg104, and Asn114 each contribute to the ATP site. Catalysis depends on His117, which acts as the Pros-phosphohistidine intermediate.

This sequence belongs to the NDK family. In terms of assembly, homotetramer. Mg(2+) serves as cofactor.

Its subcellular location is the cytoplasm. The catalysed reaction is a 2'-deoxyribonucleoside 5'-diphosphate + ATP = a 2'-deoxyribonucleoside 5'-triphosphate + ADP. The enzyme catalyses a ribonucleoside 5'-diphosphate + ATP = a ribonucleoside 5'-triphosphate + ADP. In terms of biological role, major role in the synthesis of nucleoside triphosphates other than ATP. The ATP gamma phosphate is transferred to the NDP beta phosphate via a ping-pong mechanism, using a phosphorylated active-site intermediate. The chain is Nucleoside diphosphate kinase from Rhizobium meliloti (strain 1021) (Ensifer meliloti).